A 51-amino-acid chain; its full sequence is Bacteriocin aureocin A53 (51 aa).

At Met-1 the chain carries N-formylmethionine.

Its subcellular location is the secreted. Its function is as follows. Antibacterial peptide active against a broad range of lactic acid bacteria, L.monocytogenes and many epidemiologically unrelated strains of S.aureus involved in bovine mastitis. The chain is Bacteriocin aureocin A53 (aucA) from Staphylococcus aureus.